The following is a 94-amino-acid chain: Antifungal protein (94 aa).

Residues 1-21 form the signal peptide; sequence MKFVSLASLGFALVAALGAVA. Residues 22 to 43 constitute a propeptide that is removed on maturation; sequence TPVEADSLTAGGLDARDESAVL. Disulfide bonds link cysteine 50-cysteine 76, cysteine 57-cysteine 83, cysteine 69-cysteine 71, and cysteine 92-cysteine 94.

It belongs to the antifungal protein pafB family.

It is found in the secreted. The protein localises to the host cytoplasm. Functionally, antifungal protein that acts as an inhibitor of growth of a variety of fungal species. This is Antifungal protein (afp) from Aspergillus giganteus.